The sequence spans 154 residues: MutT-like protein (154 aa).

The region spanning 15-136 (PLHSVSVAGV…YAIRLLDALD (122 aa)) is the Nudix hydrolase domain. Gly-48, Glu-63, Glu-66, and Glu-67 together coordinate Mg(2+). Positions 48–69 (GVLELDETPETGVAREVWEETG) match the Nudix box motif.

The protein belongs to the Nudix hydrolase family.

This Streptomyces ambofaciens protein is MutT-like protein.